Here is a 274-residue protein sequence, read N- to C-terminus: RNA polymerase sigma factor SigI4 (274 aa).

The short motif at 87–100 (EEYSVGLMAFNEAI) is the Polymerase core binding element. Residues 226–245 (LSELMGLVNVHRKTVERNRK) constitute a DNA-binding region (H-T-H motif).

Belongs to the sigma-70 factor family. SigI subfamily. As to quaternary structure, interacts with RsgI4.

The protein resides in the cytoplasm. With respect to regulation, negatively regulated by the anti-sigma-I factor RsgI4. Binding of the polysaccharide substrate to RsgI4 may lead to the release and activation of SigI4. Functionally, sigma factors are initiation factors that promote the attachment of RNA polymerase to specific initiation sites and are then released. This sigma factor is involved in regulation of cellulosomal genes via an external polysaccharide-sensing mechanism. The sequence is that of RNA polymerase sigma factor SigI4 from Acetivibrio thermocellus (strain ATCC 27405 / DSM 1237 / JCM 9322 / NBRC 103400 / NCIMB 10682 / NRRL B-4536 / VPI 7372) (Clostridium thermocellum).